The sequence spans 166 residues: Lipoprotein signal peptidase (166 aa).

A run of 4 helical transmembrane segments spans residues 11–31 (VWLW…TLVV), 42–62 (LLPV…SFLS), 67–87 (WQRW…VWWL), and 90–110 (LPAT…GAIG). Active-site residues include aspartate 123 and aspartate 141. Residues 133–153 (HFPVFNVADCAICIGAALLLF) form a helical membrane-spanning segment.

It belongs to the peptidase A8 family.

It is found in the cell inner membrane. The enzyme catalyses Release of signal peptides from bacterial membrane prolipoproteins. Hydrolyzes -Xaa-Yaa-Zaa-|-(S,diacylglyceryl)Cys-, in which Xaa is hydrophobic (preferably Leu), and Yaa (Ala or Ser) and Zaa (Gly or Ala) have small, neutral side chains.. It participates in protein modification; lipoprotein biosynthesis (signal peptide cleavage). Its function is as follows. This protein specifically catalyzes the removal of signal peptides from prolipoproteins. In Pseudoalteromonas translucida (strain TAC 125), this protein is Lipoprotein signal peptidase.